Reading from the N-terminus, the 430-residue chain is 3-phosphoshikimate 1-carboxyvinyltransferase (430 aa).

3-phosphoshikimate-binding residues include lysine 23, serine 24, and arginine 28. Residue lysine 23 coordinates phosphoenolpyruvate. Phosphoenolpyruvate is bound by residues glycine 95 and arginine 123. 3-phosphoshikimate is bound by residues serine 169, glutamine 171, aspartate 315, and lysine 342. Phosphoenolpyruvate is bound at residue glutamine 171. Residue aspartate 315 is the Proton acceptor of the active site. Arginine 346 and arginine 388 together coordinate phosphoenolpyruvate.

Belongs to the EPSP synthase family. Monomer.

It is found in the cytoplasm. The enzyme catalyses 3-phosphoshikimate + phosphoenolpyruvate = 5-O-(1-carboxyvinyl)-3-phosphoshikimate + phosphate. The protein operates within metabolic intermediate biosynthesis; chorismate biosynthesis; chorismate from D-erythrose 4-phosphate and phosphoenolpyruvate: step 6/7. Functionally, catalyzes the transfer of the enolpyruvyl moiety of phosphoenolpyruvate (PEP) to the 5-hydroxyl of shikimate-3-phosphate (S3P) to produce enolpyruvyl shikimate-3-phosphate and inorganic phosphate. The chain is 3-phosphoshikimate 1-carboxyvinyltransferase from Streptococcus pyogenes serotype M3 (strain ATCC BAA-595 / MGAS315).